The following is a 996-amino-acid chain: Receptor-like protein kinase HSL1 (996 aa).

A signal peptide spans 1–15 (MYLLFLFLLFPTVFS). Residues 16–618 (LNQDGFILQQ…ENEAKKRGYV (603 aa)) lie on the Extracellular side of the membrane. LRR repeat units follow at residues 59 to 83 (FSSVTSVDLSSANLAGPFPSVICRL), 84 to 107 (SNLAHLSLYNNSINSTLPLNIAAC), 109 to 131 (SLQTLDLSQNLLTGELPQTLADI), 133 to 154 (TLVHLDLTGNNFSGDIPASFGK), 155 to 178 (FENLEVLSLVYNLLDGTIPPFLGN), 179 to 203 (ISTLKMLNLSYNPFSPSRIPPEFGN), 205 to 228 (TNLEVMWLTECHLVGQIPDSLGQL), 229 to 252 (SKLVDLDLALNDLVGHIPPSLGGL), 253 to 276 (TNVVQIELYNNSLTGEIPPELGNL), 278 to 299 (SLRLLDASMNQLTGKIPDELCR), 300 to 323 (VPLESLNLYENNLEGELPASIALS), 325 to 347 (NLYEIRIFGNRLTGGLPKDLGLN), 348 to 371 (SPLRWLDVSENEFSGDLPADLCAK), 373 to 395 (ELEELLIIHNSFSGVIPESLADC), 396 to 419 (RSLTRIRLAYNRFSGSVPTGFWGL), 421 to 443 (HVNLLELVNNSFSGEISKSIGGA), 444 to 467 (SNLSLLILSNNEFTGSLPEEIGSL), 468 to 491 (DNLNQLSASGNKFSGSLPDSLMSL), 493 to 515 (ELGTLDLHGNQFSGELTSGIKSW), 516 to 539 (KKLNELNLADNEFTGKIPDEIGSL), 541 to 562 (VLNYLDLSGNMFSGKIPVSLQS), and 563 to 586 (LKLNQLNLSYNRLSGDLPPSLAKD). N93 and N97 each carry an N-linked (GlcNAc...) asparagine glycan. Residues N143, N178, N186, and N203 are each glycosylated (N-linked (GlcNAc...) asparagine). N-linked (GlcNAc...) asparagine glycosylation is present at N262. Residues N429 and N445 are each glycosylated (N-linked (GlcNAc...) asparagine). The N-linked (GlcNAc...) asparagine glycan is linked to N569. Residues 619-639 (WLLRSIFVLAAMVLLAGVAWF) traverse the membrane as a helical segment. Over 640-996 (YFKYRTFKKA…EDTSDQGSIA (357 aa)) the chain is Cytoplasmic. A Protein kinase domain is found at 676 to 962 (LDEDNVIGAG…RRVVKMLQEI (287 aa)). ATP is bound by residues 682–690 (IGAGASGKV) and K704. 2 positions are modified to phosphotyrosine: Y764 and Y802. D815 acts as the Proton acceptor in catalysis. Residue S851 is modified to Phosphoserine. 2 positions are modified to phosphotyrosine: Y859 and Y866. T867 carries the phosphothreonine modification. Residues 967 to 996 (EDSLHKIRDDKDGKLTPYYNEDTSDQGSIA) form a disordered region. The span at 968–980 (DSLHKIRDDKDGK) shows a compositional bias: basic and acidic residues.

The protein belongs to the protein kinase superfamily. Ser/Thr protein kinase family.

The protein localises to the cell membrane. The enzyme catalyses L-seryl-[protein] + ATP = O-phospho-L-seryl-[protein] + ADP + H(+). It catalyses the reaction L-threonyl-[protein] + ATP = O-phospho-L-threonyl-[protein] + ADP + H(+). In Arabidopsis thaliana (Mouse-ear cress), this protein is Receptor-like protein kinase HSL1 (HSL1).